The chain runs to 159 residues: MVLCDKGAHELGNREIRKGFCERCLYPEYFDDEEAATTTPTIKKRPPKLTWAPKKKRRKAIHLSCGCSYYGGIDCEDGFTHRGITHVHTVPDWLLLRRHQEPNLLPPPEHNNNGDGEQNNNITNQSQPQPAESVGSPDLLAELGGTFSITSSEWRSIIR.

Positions 43-60 match the Nuclear localization signal motif; sequence KKRPPKLTWAPKKKRRKA. A zinc finger lies at 65–81; sequence CGCSYYGGIDCEDGFTH. Residues 102–139 are disordered; sequence PNLLPPPEHNNNGDGEQNNNITNQSQPQPAESVGSPDL. Positions 110–124 are enriched in low complexity; sequence HNNNGDGEQNNNITN.

Belongs to the geminiviridae transcriptional activator protein family. Monomer. Suppress local silencing by interacting with and inactivating host adenosine kinase 2 (ADK2) in the cytoplasm. Interacts with and inhibits host SNF1 kinase.

Its subcellular location is the host cytoplasm. Its function is as follows. Acts as a suppressor of RNA-mediated gene silencing, also known as post-transcriptional gene silencing (PTGS), a mechanism of plant viral defense that limits the accumulation of viral RNAs. Suppresses the host RNA silencing by inhibiting adenosine kinase 2 (ADK2), a kinase involved in a general methylation pathway. Also suppresses the host basal defense by interacting with and inhibiting SNF1 kinase, a key regulator of cell metabolism implicated in innate antiviral defense. Determines pathogenicity. The sequence is that of Protein C2 from Tomato pseudo-curly top virus (TPCTV).